We begin with the raw amino-acid sequence, 359 residues long: Fe-S cluster assembly protein DRE2 (359 aa).

Residues 1 to 148 (MASTGRVLLL…KPDVAAQQAV (148 aa)) are N-terminal SAM-like domain. Disordered stretches follow at residues 97-116 (NKAW…NDND) and 149-210 (PLKL…PSGV). The linker stretch occupies residues 149–246 (PLKLGRRKKE…EDELLGEDDM (98 aa)). Positions 152-164 (LGRRKKEKERRHP) are enriched in basic residues. Residues 167–183 (NDVTNGKVNAPSSNGVN) are compositionally biased toward polar residues. Residues 184–200 (ASTSTATATATTTTTTT) are compositionally biased toward low complexity. Cys-256, Cys-267, Cys-270, and Cys-272 together coordinate [2Fe-2S] cluster. Residues 256-272 (CRPKPGKRRRACKDCSC) form a fe-S binding site A region. Positions 322, 325, 333, and 336 each coordinate [4Fe-4S] cluster. 2 consecutive short sequence motifs (cx2C motif) follow at residues 322 to 325 (CGNC) and 333 to 336 (CDGC). Positions 322 to 336 (CGNCSLGDAFRCDGC) are fe-S binding site B.

Belongs to the anamorsin family. Monomer. Interacts with TAH18. Interacts with MIA40. [2Fe-2S] cluster is required as a cofactor. It depends on [4Fe-4S] cluster as a cofactor.

Its subcellular location is the cytoplasm. The protein resides in the mitochondrion intermembrane space. Component of the cytosolic iron-sulfur (Fe-S) protein assembly (CIA) machinery required for the maturation of extramitochondrial Fe-S proteins. Part of an electron transfer chain functioning in an early step of cytosolic Fe-S biogenesis, facilitating the de novo assembly of a [4Fe-4S] cluster on the scaffold complex CFD1-NBP35. Electrons are transferred to DRE2 from NADPH via the FAD- and FMN-containing protein TAH18. TAH18-DRE2 are also required for the assembly of the diferric tyrosyl radical cofactor of ribonucleotide reductase (RNR), probably by providing electrons for reduction during radical cofactor maturation in the catalytic small subunit RNR2. This Blastomyces gilchristii (strain SLH14081) (Blastomyces dermatitidis) protein is Fe-S cluster assembly protein DRE2.